The sequence spans 744 residues: MNQKGTVRLKALVLICLPLFLIATPVPVAVTEDDRQDRIESEAAEKEWANTLVSKVAQSNGTGTIKVSAPAKPTLRRMDNEEDEVISIECVYYDEMECEKSGDCEITKKTCYSEAHLKAVGCLAVFGLPTQEINSTEPYLKVDKPQYKSLGCMPYQHADSMNCENESSCRQGRSFRGGIGMCCCSTNNCNMPDLIEMVNPSLKKDSDNSALLWASTPSNMDLESLDKFPFYWIIIIALSVILCIALLILAYVGWKFQQNKKEEIKKQQKIKFDMEKTDALEAGNVPLVEPEEEMIEMVETPKELPITDFQLISKGRFGKVFKAQYTPDSGEKRLVAVKKLNEFQKASFLAEKRIFDELNEYPKWYKSIVEFVCAEKIGDEYWIVTEFHERLSLYELLKNNVISITSANRIIMSMIDGLQFLHDDRPYFFGHPKKPIIHRDIKSKNILVKSDMTTCIADFGLARIYSYDIEQSDLLGQVGTKRYMSPEMLEGATEFTPTAFKAMDVYSMGLVMWEVISRTKLHQTDEPPNYQMPFQVIGFDPTIGLMRNYVVSKKERPQWRDEIIKHEYMSLLKKVTEEMWDPEACARITAGCAFARVWNHIMSSPDSSEGYHSGSSMKNRGVDDVEQSEKPEGIEEMQHYHASSPSKRQHPSPNPFFDSCPPPPPIPVILENGGILQPDNAEPEPEELPDLPIVEKIYDIATNMLFSREELDLMNAQRQVEYEAGADTRASTPTPSGTFGTFTT.

The signal sequence occupies residues 1–31 (MNQKGTVRLKALVLICLPLFLIATPVPVAVT). Over 48–253 (WANTLVSKVA…IALLILAYVG (206 aa)) the chain is Extracellular. 3 N-linked (GlcNAc...) asparagine glycosylation sites follow: N60, N134, and N165. The chain crosses the membrane as a helical span at residues 254–274 (WKFQQNKKEEIKKQQKIKFDM). Residues 275–744 (EKTDALEAGN…PSGTFGTFTT (470 aa)) are Cytoplasmic-facing. Residues 306–603 (ITDFQLISKG…FARVWNHIMS (298 aa)) enclose the Protein kinase domain. Residues 312–320 (ISKGRFGKV) and K338 each bind ATP. D440 serves as the catalytic Proton acceptor. 2 disordered regions span residues 605-686 (PDSS…PEPE) and 724-744 (AGADTRASTPTPSGTFGTFTT). Positions 620–639 (RGVDDVEQSEKPEGIEEMQH) are enriched in basic and acidic residues. Positions 731–744 (STPTPSGTFGTFTT) are enriched in low complexity.

This sequence belongs to the protein kinase superfamily. TKL Ser/Thr protein kinase family. TGFB receptor subfamily. In terms of assembly, may interact with daf-1 to regulate dauer larva development. Interacts with sma-10. In terms of tissue distribution, pharynx, intestine, hypodermis and body wall muscles in L1 through to adult stages. Also expressed in head neurons, ventral cord and tail neurons. Subset of head neurons show coexpression with daf-1 when dauer/nondauer decision is made.

The protein localises to the cell membrane. It catalyses the reaction L-threonyl-[receptor-protein] + ATP = O-phospho-L-threonyl-[receptor-protein] + ADP + H(+). The enzyme catalyses L-seryl-[receptor-protein] + ATP = O-phospho-L-seryl-[receptor-protein] + ADP + H(+). Functionally, involved in a TGF-beta pathway. May be a receptor for TGF-beta-like ligand daf-7. Controls the decision of whether or not larvae enter a developmentally arrested state, known as dauer, in response to environmental conditions. Regulates body size and male tail patterning. Involved in regulating entry into quiescence triggered by satiety. Involved in sensitivity to CO2 levels. This is Cell surface receptor daf-4 from Caenorhabditis elegans.